We begin with the raw amino-acid sequence, 68 residues long: Large ribosomal subunit protein bL31 (68 aa).

Zn(2+) is bound by residues Cys-16, Cys-18, Cys-38, and Cys-41.

Belongs to the bacterial ribosomal protein bL31 family. Type A subfamily. In terms of assembly, part of the 50S ribosomal subunit. Zn(2+) serves as cofactor.

Binds the 23S rRNA. The sequence is that of Large ribosomal subunit protein bL31 from Thiobacillus denitrificans (strain ATCC 25259 / T1).